Reading from the N-terminus, the 241-residue chain is DNA repair protein RecO (241 aa).

Belongs to the RecO family.

In terms of biological role, involved in DNA repair and RecF pathway recombination. The sequence is that of DNA repair protein RecO from Orientia tsutsugamushi (strain Boryong) (Rickettsia tsutsugamushi).